A 305-amino-acid chain; its full sequence is Endonuclease 1 (305 aa).

The signal sequence occupies residues 1–28 (MASAFRSSTRLILVLGILILCSVSSVRS). A divalent metal cation contacts are provided by tryptophan 29 and histidine 34. Substrate is bound at residue 29-34 (WSKEGH). A disulfide bridge connects residues cysteine 38 and cysteine 69. 2 residues coordinate a divalent metal cation: aspartate 73 and histidine 88. Substrate is bound by residues 73–79 (DQIRHWY), 88–91 (HYID), and 98–103 (SYEYSR). 3 disulfide bridges follow: cysteine 97–cysteine 249, cysteine 105–cysteine 115, and cysteine 230–cysteine 236. Substrate contacts are provided by asparagine 122 and tyrosine 139. Asparagine 122 carries an N-linked (GlcNAc...) asparagine glycan. A glycan (N-linked (GlcNAc...) asparagine) is linked at asparagine 140. A divalent metal cation-binding residues include histidine 150, aspartate 154, histidine 160, histidine 184, and aspartate 188. The substrate binding stretch occupies residues 150 to 199 (HFMGDIHQPMHVGFTSDEGGNTIDLRWYKHKSNLHHVWDREIILTALKEN). Residue asparagine 214 is glycosylated (N-linked (GlcNAc...) asparagine). A propeptide spans 287–305 (MILNRVFSDDHAIAGVAAT) (removed in mature form).

Belongs to the nuclease type I family. As to quaternary structure, monomer. Requires Mn(2+) as cofactor. The cofactor is Ca(2+). In terms of tissue distribution, mostly expressed in flowers and during leaf and stem senescence, and, to a lower extent, detectable at low levels in roots, leaves, and stems. Particularly expressed in senescing tissues in a NAC92/ORE1-dependent manner.

The catalysed reaction is Endonucleolytic cleavage to 5'-phosphomononucleotide and 5'-phosphooligonucleotide end-products.. Functionally, endonuclease that can use RNA, single-stranded and double-stranded DNA as substrates. Hydrolyzes single-stranded DNA and RNA without apparent specificity for bases during senescence. Endonuclease that recognizes and cleaves all types of mismatches with high efficiency, including heteroduplex double-stranded DNA. Maybe involved in programmed cell death (PCD) and senescence. The polypeptide is Endonuclease 1 (Arabidopsis thaliana (Mouse-ear cress)).